The following is a 572-amino-acid chain: Na(+)/citrate cotransporter (572 aa).

8 consecutive transmembrane segments (helical) span residues 13–33 (SFAILLFTPILMLPLVILIPD), 53–73 (VIPVAVTSLLPVLLFPLLKVL), 80–100 (IQYMKDTNMLFLGSLIVAVAV), 124–144 (LMLGFMFVTAFLSMWISNTAA), 218–238 (SASIGGTATLTGTGPNVVLLG), 255–275 (SWFGFAFPNMVMMLVLAWLWL), 315–335 (SLSYPECNVLFCFTLLVILWF), and 357–377 (HITDATVAIFVAILLFIIPSQ). The N-linked (GlcNAc...) asparagine glycan is linked to asparagine 382. 4 consecutive transmembrane segments (helical) span residues 410-430 (VPWDIVLLLGGGFAMAKGCET), 443-463 (PLRLVKPAVITLILSCLVAMT), 491-511 (PLYVMIPCTMSASLAFMLPVA), and 532-552 (TGLIMNFVGILSVFLSVNTWG). Asparagine 566 is a glycosylation site (N-linked (GlcNAc...) asparagine).

The protein belongs to the SLC13A/DASS transporter (TC 2.A.47) family. NADC subfamily. In terms of assembly, homodimer.

It is found in the cell membrane. It carries out the reaction citrate(out) + 4 Na(+)(out) = citrate(in) + 4 Na(+)(in). With respect to regulation, inhibited by Li(+). Its function is as follows. High-affinity sodium/citrate cotransporter that mediates citrate entry into cells, which is a critical participant of biochemical pathways. May function in various metabolic processes in which citrate has a critical role such as energy production (Krebs cycle), fatty acid synthesis, cholesterol synthesis, glycolysis, and gluconeogenesis. Transports citrate into the cell in a Na(+)-dependent manner, recognizing the trivalent form of citrate (physiological pH) rather than the divalent form. Can recognizes succinate as a substrate, but its affinity for succinate is several fold lower than for citrate. The stoichiometry is probably 4 Na(+) for each carboxylate, irrespective of whether the translocated substrate is divalent or trivalent, rendering the process electrogenic. Involved in the regulation of citrate levels in the brain. This Mus musculus (Mouse) protein is Na(+)/citrate cotransporter (Slc13a5).